We begin with the raw amino-acid sequence, 500 residues long: Glycerol kinase (500 aa).

Residue T11 coordinates ADP. ATP is bound by residues T11, T12, and S13. Position 11 (T11) interacts with sn-glycerol 3-phosphate. Residue R15 participates in ADP binding. Residues R81, E82, Y133, and D242 each coordinate sn-glycerol 3-phosphate. Positions 81, 82, 133, 242, and 243 each coordinate glycerol. Residues T264 and G307 each coordinate ADP. ATP-binding residues include T264, G307, Q311, and G411. Residue G411 participates in ADP binding.

This sequence belongs to the FGGY kinase family.

The catalysed reaction is glycerol + ATP = sn-glycerol 3-phosphate + ADP + H(+). The protein operates within polyol metabolism; glycerol degradation via glycerol kinase pathway; sn-glycerol 3-phosphate from glycerol: step 1/1. Inhibited by fructose 1,6-bisphosphate (FBP). In terms of biological role, key enzyme in the regulation of glycerol uptake and metabolism. Catalyzes the phosphorylation of glycerol to yield sn-glycerol 3-phosphate. The protein is Glycerol kinase of Rhodopseudomonas palustris (strain ATCC BAA-98 / CGA009).